The primary structure comprises 431 residues: L-ornithine N(5)-monooxygenase (431 aa).

Residues 40–48 and Gln59 each bind FAD; that span reads EKLPTFSWH. A substrate-binding site is contributed by Lys64. NADP(+) is bound by residues 202-205 and Arg228; that span reads CGQS. Substrate-binding positions include 242-245 and Asn273; that span reads NSLY. 273 to 275 is an NADP(+) binding site; that stretch reads NYS. 399-401 lines the FAD pocket; sequence TLL. Residue Ser402 coordinates substrate.

It belongs to the lysine N(6)-hydroxylase/L-ornithine N(5)-oxygenase family. The cofactor is FAD.

The protein resides in the cytoplasm. It is found in the nucleus. It catalyses the reaction L-ornithine + NADPH + O2 = N(5)-hydroxy-L-ornithine + NADP(+) + H2O. The catalysed reaction is L-ornithine + NADH + O2 = N(5)-hydroxy-L-ornithine + NAD(+) + H2O. The protein operates within siderophore biosynthesis; ferrichrome biosynthesis. Functionally, catalyzes the conversion of L-ornithine to N(5)-hydroxyornithine, the first step in the biosynthesis of all hydroxamate-containing siderophores, such as ferrichrome. This chain is L-ornithine N(5)-monooxygenase, found in Schizosaccharomyces pombe (strain 972 / ATCC 24843) (Fission yeast).